Reading from the N-terminus, the 704-residue chain is Ion-translocating oxidoreductase complex subunit C (704 aa).

4Fe-4S ferredoxin-type domains lie at 368-397 and 407-436; these read MGAP…QQLY and KATA…VQYF. [4Fe-4S] cluster contacts are provided by Cys377, Cys380, Cys383, Cys387, Cys416, Cys419, Cys422, and Cys426. Residues 534–682 form a disordered region; sequence QARAKQAAHP…AEPADPRKAA (149 aa).

Belongs to the 4Fe4S bacterial-type ferredoxin family. RnfC subfamily. In terms of assembly, the complex is composed of six subunits: RsxA, RsxB, RsxC, RsxD, RsxE and RsxG. It depends on [4Fe-4S] cluster as a cofactor.

It is found in the cell inner membrane. Its function is as follows. Part of a membrane-bound complex that couples electron transfer with translocation of ions across the membrane. Required to maintain the reduced state of SoxR. This is Ion-translocating oxidoreductase complex subunit C from Salmonella enteritidis PT4 (strain P125109).